The sequence spans 158 residues: 18.2 kDa class I heat shock protein (158 aa).

One can recognise a sHSP domain in the interval 44–158 (ENSAFVSTRV…PEVKTIDISG (115 aa)).

This sequence belongs to the small heat shock protein (HSP20) family. As to quaternary structure, forms oligomeric structures.

The protein resides in the cytoplasm. The polypeptide is 18.2 kDa class I heat shock protein (HSP18.2) (Medicago sativa (Alfalfa)).